The sequence spans 697 residues: Potassium-transporting ATPase ATP-binding subunit (697 aa).

4 consecutive transmembrane segments (helical) span residues 55-75 (PIMF…FLPS), 79-99 (SIPG…VLFA), 245-265 (LTLI…YLGF), and 271-291 (VLVA…LSAI). The active-site 4-aspartylphosphate intermediate is aspartate 324. Residues aspartate 361, glutamate 365, 393–400 (FKAETRMS), and lysine 412 contribute to the ATP site. Residues aspartate 535 and aspartate 539 each contribute to the Mg(2+) site. 3 consecutive transmembrane segments (helical) span residues 605–625 (FAII…LNIM), 633–653 (AILS…PLAM), and 677–697 (GGVI…GLFI).

This sequence belongs to the cation transport ATPase (P-type) (TC 3.A.3) family. Type IA subfamily. The system is composed of three essential subunits: KdpA, KdpB and KdpC.

It is found in the cell membrane. The enzyme catalyses K(+)(out) + ATP + H2O = K(+)(in) + ADP + phosphate + H(+). In terms of biological role, part of the high-affinity ATP-driven potassium transport (or Kdp) system, which catalyzes the hydrolysis of ATP coupled with the electrogenic transport of potassium into the cytoplasm. This subunit is responsible for energy coupling to the transport system and for the release of the potassium ions to the cytoplasm. The polypeptide is Potassium-transporting ATPase ATP-binding subunit (Bacillus cereus (strain ATCC 14579 / DSM 31 / CCUG 7414 / JCM 2152 / NBRC 15305 / NCIMB 9373 / NCTC 2599 / NRRL B-3711)).